The chain runs to 463 residues: mRNA-capping enzyme subunit alpha (463 aa).

The active-site N6-GMP-lysine intermediate is K66. The tract at residues 404–463 (WEERKSKKRTHSSISGPMLPPVAETKAPREATQSRYIDDEDWSDEADDDDEDSLKRARIE) is disordered. The span at 441-455 (DDEDWSDEADDDDED) shows a compositional bias: acidic residues.

It belongs to the eukaryotic GTase family. In terms of assembly, heterodimer. The mRNA-capping enzyme is composed of two separate chains alpha and beta, respectively a mRNA guanylyltransferase and an mRNA 5'-triphosphate monophosphatase.

It is found in the nucleus. It catalyses the reaction a 5'-end diphospho-ribonucleoside in mRNA + GTP + H(+) = a 5'-end (5'-triphosphoguanosine)-ribonucleoside in mRNA + diphosphate. Second step of mRNA capping. Transfer of the GMP moiety of GTP to the 5'-end of RNA via an enzyme-GMP covalent reaction intermediate. The polypeptide is mRNA-capping enzyme subunit alpha (CEG1) (Eremothecium gossypii (strain ATCC 10895 / CBS 109.51 / FGSC 9923 / NRRL Y-1056) (Yeast)).